A 258-amino-acid polypeptide reads, in one-letter code: Maintenance of carboxysome distribution protein A (258 aa).

ATP is bound by residues G11, G12, Q13, G14, K15, T16, T17, Q40, E147, K151, F182, R183, L216, E217, S218, and Y221. T16 serves as a coordination point for Mg(2+).

Belongs to the ParA family. McdA subfamily. In terms of assembly, homodimerizes in the presence of ATP, making extra nucleotide contacts than with ADP or AMP-PNP. Each subunit binds 1 ATP molecule; Glu-147, Lys-151 and Arg-183 cross the dimer interface to contact ATP in the other subunit, while Phe-182, Arg-183 and Tyr-221 stack with the adenine base in their own subunit. Forms a complex with McdB.

The protein resides in the cytoplasm. Its subcellular location is the nucleoid. It carries out the reaction ATP + H2O = ADP + phosphate + H(+). Functionally, mcdA and McdB together mediate carboxysome (Cb) spacing, size, ultrastructure and probably inheritance in the cell, together they prevent Cb aggregation. McdA is an ATPase that forms dynamic gradients on the nucleoid in response to adapter protein McdB, which associates with carboxysomes. The interplay between McdA gradients on the nucleoid and McdB-bound carboxysomes result in the equal spacing of Cbs along the cell length. Binds DNA saturably and strongly in the presence of Mg(2+)ATP; without ATP, DNA-binding is very poor (tested with a mutant that should not be able to hydrolyze ATP, Asp-38-Ala). Decreasing the NaCl concentration increases DNA binding. In terms of biological role, incorrect positioning (aggregation) of carboxysomes results in reduced CO(2) fixation by encapsulated ribulose-1,5-bisphosphate carboxylase (RuBisCO, cbbL/cbbS), which leads to slower growth. The polypeptide is Maintenance of carboxysome distribution protein A (Gloeothece citriformis (strain PCC 7424) (Cyanothece sp. (strain PCC 7424))).